The following is a 314-amino-acid chain: Cytochrome f (314 aa).

The signal sequence occupies residues 1-30; that stretch reads MATNKFFKSLLFALTIAINSFGFCIQDAVA. Heme is bound by residues tyrosine 31, cysteine 51, cysteine 54, and histidine 55. The helical transmembrane segment at 280–300 threads the bilayer; it reads IYGYLAFCFSVLITQIMLVLK.

This sequence belongs to the cytochrome f family. As to quaternary structure, the 4 large subunits of the cytochrome b6-f complex are cytochrome b6, subunit IV (17 kDa polypeptide, petD), cytochrome f and the Rieske protein, while the 4 small subunits are PetG, PetL, PetM and PetN. The complex functions as a dimer. Heme is required as a cofactor.

The protein resides in the plastid. It localises to the chloroplast thylakoid membrane. Component of the cytochrome b6-f complex, which mediates electron transfer between photosystem II (PSII) and photosystem I (PSI), cyclic electron flow around PSI, and state transitions. This chain is Cytochrome f, found in Phaeodactylum tricornutum (strain CCAP 1055/1).